Here is a 188-residue protein sequence, read N- to C-terminus: Peptidyl-tRNA hydrolase (188 aa).

Tyr17 is a binding site for tRNA. His22 acts as the Proton acceptor in catalysis. Residues Tyr65, Asn67, and Asn113 each coordinate tRNA.

It belongs to the PTH family. In terms of assembly, monomer.

It localises to the cytoplasm. It carries out the reaction an N-acyl-L-alpha-aminoacyl-tRNA + H2O = an N-acyl-L-amino acid + a tRNA + H(+). Its function is as follows. Hydrolyzes ribosome-free peptidyl-tRNAs (with 1 or more amino acids incorporated), which drop off the ribosome during protein synthesis, or as a result of ribosome stalling. In terms of biological role, catalyzes the release of premature peptidyl moieties from peptidyl-tRNA molecules trapped in stalled 50S ribosomal subunits, and thus maintains levels of free tRNAs and 50S ribosomes. This is Peptidyl-tRNA hydrolase from Mycoplasma pneumoniae (strain ATCC 29342 / M129 / Subtype 1) (Mycoplasmoides pneumoniae).